The sequence spans 152 residues: Protein-export protein SecB (152 aa).

Belongs to the SecB family. Homotetramer, a dimer of dimers. One homotetramer interacts with 1 SecA dimer.

It localises to the cytoplasm. In terms of biological role, one of the proteins required for the normal export of preproteins out of the cell cytoplasm. It is a molecular chaperone that binds to a subset of precursor proteins, maintaining them in a translocation-competent state. It also specifically binds to its receptor SecA. The sequence is that of Protein-export protein SecB from Rickettsia massiliae (strain Mtu5).